The sequence spans 149 residues: Chromophore lyase CpcS/CpeS homolog (149 aa).

It belongs to the CpcS/CpeS biliprotein lyase family.

Its subcellular location is the plastid. It is found in the chloroplast. Its function is as follows. Might function to covalently attach a chromophore to Cys residue(s) of phycobiliproteins. This is Chromophore lyase CpcS/CpeS homolog from Pyropia yezoensis (Susabi-nori).